Reading from the N-terminus, the 239-residue chain is LexA repressor (239 aa).

The H-T-H motif DNA-binding region spans 26 to 46 (FDEMKEALDLASKSGIHRLIT). A disordered region spans residues 90–110 (GSLGKTPPPPARPAPVATNDD). Active-site for autocatalytic cleavage activity residues include S160 and K198.

The protein belongs to the peptidase S24 family. In terms of assembly, homodimer.

The catalysed reaction is Hydrolysis of Ala-|-Gly bond in repressor LexA.. Represses a number of genes involved in the response to DNA damage (SOS response), including recA and lexA. In the presence of single-stranded DNA, RecA interacts with LexA causing an autocatalytic cleavage which disrupts the DNA-binding part of LexA, leading to derepression of the SOS regulon and eventually DNA repair. The chain is LexA repressor from Brucella anthropi (strain ATCC 49188 / DSM 6882 / CCUG 24695 / JCM 21032 / LMG 3331 / NBRC 15819 / NCTC 12168 / Alc 37) (Ochrobactrum anthropi).